We begin with the raw amino-acid sequence, 257 residues long: Undecaprenyl-diphosphatase (257 aa).

The next 8 membrane-spanning stretches (helical) occupy residues 4-24, 51-71, 78-98, 106-126, 133-153, 171-191, 207-227, and 235-255; these read LFKAIILGIIQGITEFLPISS, HVGTLISLLYCFWKDWINIFF, LFIIIGTIPAGIAGIAFHDLI, LIIVVTLILVGFLMLYAEKVG, ITLSDAVVIGTAQAIALIPGV, AYAAKFSFLLSTPAIAGAAML, LFIIGVISAAITGIIAIKFLL, and LNLFIYYRWFLAVVIFLLYFF.

It belongs to the UppP family.

The protein localises to the cell inner membrane. The enzyme catalyses di-trans,octa-cis-undecaprenyl diphosphate + H2O = di-trans,octa-cis-undecaprenyl phosphate + phosphate + H(+). Catalyzes the dephosphorylation of undecaprenyl diphosphate (UPP). Confers resistance to bacitracin. The chain is Undecaprenyl-diphosphatase from Thermodesulfovibrio yellowstonii (strain ATCC 51303 / DSM 11347 / YP87).